The chain runs to 238 residues: Large ribosomal subunit protein uL2 (238 aa).

Residues 200–238 (HGGGLHQSVSRPSTVSRNAPPGRKVGHIAARRTGRKEGK) form a disordered region. Polar residues predominate over residues 206–216 (QSVSRPSTVSR). Basic residues predominate over residues 223–238 (KVGHIAARRTGRKEGK).

The protein belongs to the universal ribosomal protein uL2 family. In terms of assembly, part of the 50S ribosomal subunit. Forms a bridge to the 30S subunit in the 70S ribosome.

Its function is as follows. One of the primary rRNA binding proteins. Required for association of the 30S and 50S subunits to form the 70S ribosome, for tRNA binding and peptide bond formation. It has been suggested to have peptidyltransferase activity; this is somewhat controversial. Makes several contacts with the 16S rRNA in the 70S ribosome. In Saccharolobus islandicus (strain L.S.2.15 / Lassen #1) (Sulfolobus islandicus), this protein is Large ribosomal subunit protein uL2.